The chain runs to 100 residues: Probable DNA-binding protein HU (100 aa).

It belongs to the bacterial histone-like protein family.

Its function is as follows. Histone-like DNA-binding protein which is capable of wrapping DNA to stabilize it, and thus to prevent its denaturation under extreme environmental conditions. The polypeptide is Probable DNA-binding protein HU (hup) (Chlamydia pneumoniae (Chlamydophila pneumoniae)).